The following is a 299-amino-acid chain: MSSIKIECVLRENCHCGESPVWEEASNSLLFVDIPAKKVCRWDSLSKQVQRVTVDAPVSSVALRQSGGYVATVGTKFCALNWEDQSAVVLATVDKEKKNNRFNDGKVDPAGRYFAGTMAEETAPAVLERRQGSLYSLFPDHHVEKYFDQVDISNGLDWSMDHKIFYYIDSLSYSVDAFDYDLQTGKISNRRSVYKLEKEEQIPDGMCIDVEGKLWVACYNGGRVIRLDPETGKRLQTVKLPVDKTTSCCFGGKDYSEMYVTCARDGLDSKGLLQQPEAGGIFKITGLGVKGIPPYPYTG.

Glutamate 18 serves as a coordination point for a divalent metal cation. Substrate is bound by residues arginine 101, asparagine 103, and glutamate 121. 2 residues coordinate a divalent metal cation: asparagine 154 and aspartate 204. The active-site Proton donor/acceptor is the aspartate 204. Lysine 244 and lysine 253 each carry N6-succinyllysine.

Belongs to the SMP-30/CGR1 family. Monomer. The cofactor is Zn(2+). Mn(2+) is required as a cofactor. It depends on Ca(2+) as a cofactor. Requires Mg(2+) as cofactor.

The protein localises to the cytoplasm. It catalyses the reaction D-glucono-1,5-lactone + H2O = D-gluconate + H(+). It participates in cofactor biosynthesis; L-ascorbate biosynthesis via UDP-alpha-D-glucuronate pathway; L-ascorbate from UDP-alpha-D-glucuronate: step 3/4. Gluconolactonase with low activity towards other sugar lactones, including gulonolactone and galactonolactone. Catalyzes a key step in ascorbic acid (vitamin C) biosynthesis. Can also hydrolyze diisopropyl phosphorofluoridate and phenylacetate (in vitro). Calcium-binding protein. Modulates Ca(2+) signaling, and Ca(2+)-dependent cellular processes and enzyme activities. The sequence is that of Regucalcin (RGN) from Bos taurus (Bovine).